The following is a 669-amino-acid chain: Hypoxia-inducible factor 3-alpha (669 aa).

The tract at residues 1–27 is disordered; it reads MALGLQRARSTTELRKEKSRDAARSRR. The segment covering 10–27 has biased composition (basic and acidic residues); it reads STTELRKEKSRDAARSRR. The bHLH domain occupies 14–67; sequence LRKEKSRDAARSRRSQETEVLYQLAHTLPFARGVSAHLDKASIMRLTISYLRMH. Residues 77–100 form a nuclear localization signal region; the sequence is QVGAGGEPLDACYLKALEGFVMVL. PAS domains lie at 82 to 154 and 227 to 297; these read GEPL…LSRR and PHPG…LSKG. The tract at residues 230 to 274 is nuclear export signal; the sequence is GSLEPPLGRGAFLSRHSLDMKFTYCDDRIAEVAGYSPDDLIGCSA. The disordered stretch occupies residues 354 to 389; the sequence is EQTEQHSRRPIQRGAPSQKDTPNPGDSLDTPGPRIL. Positions 414 to 418 match the LRRLL motif; that stretch reads LRRLL. Positions 430-444 are enriched in polar residues; the sequence is TPSTPLATRHPQSPL. Residues 430–451 are disordered; the sequence is TPSTPLATRHPQSPLSADLPDE. Residues 452–581 form an ODD region; sequence LPVGTENVHR…TLAQSSEDED (130 aa). Residues 454–506 are NTAD; the sequence is VGTENVHRLFTSGKDTEAVETDLDIAQDADALDLEMLAPYISMDDDFQLNASE. Lys-467 is covalently cross-linked (Glycyl lysine isopeptide (Lys-Gly) (interchain with G-Cter in ubiquitin)). The LAPYISMD signature appears at 490 to 497; it reads LAPYISMD. Pro-492 is modified (4-hydroxyproline). Disordered stretches follow at residues 523–600 and 619–669; these read RARS…SPEH and APGS…AQAD. Low complexity-rich tracts occupy residues 530-541 and 550-564; these read LSPPALEPSLLP and SCSS…ASSP. Lys-570 is covalently cross-linked (Glycyl lysine isopeptide (Lys-Gly) (interchain with G-Cter in ubiquitin)). A compositionally biased stretch (low complexity) spans 629-646; sequence PLLNLNEPLGLGPSLLSP.

Isoform 2 interacts (via ODD domain) with VHL (via beta domain). Isoform 4 interacts with HIF1A; the interaction inhibits the binding of HIF1A to hypoxia-responsive element (HRE) and HIF1A/ARNT-dependent transcriptional activation. Isoform 4 interacts with ARNT; the interaction occurs in a HIF1A- and DNA-binding-independent manner and does not induce HIF1A/ARNT-dependent transcriptional activation. Isoform 4 interacts with EPAS1. Interacts with BAD, BCL2L2 and MCL1. In normoxia, hydroxylated on Pro-492 in the oxygen-dependent degradation domain (ODD) by prolyl hydroxylase(s) (PHD). The hydroxylated proline promotes interaction with VHL, initiating rapid ubiquitination and subsequent proteasomal degradation. In terms of processing, ubiquitinated; ubiquitination occurs in a VHL- and oxygen-dependent pathway and subsequently targeted for proteasomal degradation. As to expression, expressed in vascular cells (at protein level). Expressed in kidney. Expressed in lung epithelial cells. Expressed in endothelial cells (venous and arterial cells from umbilical cord and aortic endothelial cells) and in vascular smooth muscle cells (aorta). Strongly expressed in the heart, placenta, and skeletal muscle, whereas a weak expression profile was found in the lung, liver, and kidney. Expressed weakly in cell renal cell carcinoma (CC-RCC) compared to normal renal cells. Expression is down-regulated in numerous kidney tumor cells compared to non tumor kidney tissues. Isoform 2 is expressed in heart, placenta, lung, liver, skeletal muscle and pancreas and in numerous cancer cell lines. Isoform 3 and isoform 4 are weakly expressed in heart, placenta, lung, liver, skeletal muscle and pancreas. Isoform 4 is expressed in fetal tissues, such as heart, brain, thymus, lung, liver, skeletal kidney and spleen. Isoform 3 is weakly expressed in fetal tissues, such as liver and kidney.

Its subcellular location is the nucleus. It localises to the cytoplasm. The protein resides in the nucleus speckle. The protein localises to the mitochondrion. Functionally, acts as a transcriptional regulator in adaptive response to low oxygen tension. Acts as a regulator of hypoxia-inducible gene expression. Functions as an inhibitor of angiogenesis in hypoxic cells of the cornea. Plays a role in the development of the cardiorespiratory system. May also be involved in apoptosis. Attenuates the ability of transcription factor HIF1A to bind to hypoxia-responsive elements (HRE) located within the enhancer/promoter of hypoxia-inducible target genes and hence inhibits HRE-driven transcriptional activation. Also inhibits hypoxia-inducible ARNT-mediated gene expression. Its function is as follows. Attenuates the ability of transcription factor HIF1A to bind to hypoxia-responsive elements (HRE) located within the enhancer/promoter of hypoxia-inducible target genes and hence inhibits HRE-driven transcriptional activation. In terms of biological role, attenuates the ability of transcription factor HIF1A and EPAS1/HIF2A to bind to hypoxia-responsive elements (HRE) located within the enhancer/promoter of hypoxia-inducible target genes and hence inhibits HRE-driven transcriptional activation. May act as a tumor suppressor and inhibits malignant cell transformation. In Homo sapiens (Human), this protein is Hypoxia-inducible factor 3-alpha.